A 275-amino-acid polypeptide reads, in one-letter code: 4-diphosphocytidyl-2-C-methyl-D-erythritol kinase (275 aa).

Lys-14 is a catalytic residue. Residue 94-104 participates in ATP binding; sequence PMEAGLGGGSA. Residue Asp-134 is part of the active site.

This sequence belongs to the GHMP kinase family. IspE subfamily.

The catalysed reaction is 4-CDP-2-C-methyl-D-erythritol + ATP = 4-CDP-2-C-methyl-D-erythritol 2-phosphate + ADP + H(+). It participates in isoprenoid biosynthesis; isopentenyl diphosphate biosynthesis via DXP pathway; isopentenyl diphosphate from 1-deoxy-D-xylulose 5-phosphate: step 3/6. Functionally, catalyzes the phosphorylation of the position 2 hydroxy group of 4-diphosphocytidyl-2C-methyl-D-erythritol. This chain is 4-diphosphocytidyl-2-C-methyl-D-erythritol kinase, found in Thermosipho africanus (strain TCF52B).